The primary structure comprises 734 residues: Ribosome-releasing factor 2, mitochondrial (734 aa).

The transit peptide at 1–25 (MLQYCLLRRYRFLLRQHAQVIKRCY) directs the protein to the mitochondrion. One can recognise a tr-type G domain in the interval 27–303 (GDIRNIGILA…AVNAYLPMPE (277 aa)). Residues 36 to 43 (AHIDAGKT), 100 to 104 (DTPGH), and 154 to 157 (NKMD) each bind GTP.

This sequence belongs to the TRAFAC class translation factor GTPase superfamily. Classic translation factor GTPase family. EF-G/EF-2 subfamily.

The protein localises to the mitochondrion. Its function is as follows. Mitochondrial GTPase that mediates the disassembly of ribosomes from messenger RNA at the termination of mitochondrial protein biosynthesis. Not involved in the GTP-dependent ribosomal translocation step during translation elongation. This Drosophila grimshawi (Hawaiian fruit fly) protein is Ribosome-releasing factor 2, mitochondrial.